A 164-amino-acid chain; its full sequence is Glycine cleavage system H protein, mitochondrial (164 aa).

The N-terminal 39 residues, 1–39, are a transit peptide targeting the mitochondrion; the sequence is MAWLVLRRLGPVLAPRCPRLSLRPQVPAVRRLGTGSLLL. Residues 57-139 enclose the Lipoyl-binding domain; sequence IGTVGISNFA…YQDGWLIKMT (83 aa). Lysine 98 is modified (N6-lipoyllysine).

It belongs to the GcvH family. In terms of assembly, the glycine cleavage system is composed of four proteins: P (GLDC), T (GCST), L (DLD) and H (GCSH). Interacts with GLDC. (R)-lipoate is required as a cofactor.

The protein localises to the mitochondrion. Its function is as follows. The glycine cleavage system catalyzes the degradation of glycine. The H protein (GCSH) shuttles the methylamine group of glycine from the P protein (GLDC) to the T protein (GCST). Has a pivotal role in the lipoylation of enzymes involved in cellular energetics such as the mitochondrial dihydrolipoyllysine-residue acetyltransferase component of pyruvate dehydrogenase complex (DLAT), and the mitochondrial dihydrolipoyllysine-residue succinyltransferase component of 2-oxoglutarate dehydrogenase complex (DLST). The sequence is that of Glycine cleavage system H protein, mitochondrial from Gallus gallus (Chicken).